The following is a 352-amino-acid chain: Uroporphyrinogen decarboxylase (352 aa).

Substrate-binding positions include Arg-26 to Arg-30, Asp-76, Tyr-153, Ser-208, and His-323.

It belongs to the uroporphyrinogen decarboxylase family. Homodimer.

It localises to the cytoplasm. It catalyses the reaction uroporphyrinogen III + 4 H(+) = coproporphyrinogen III + 4 CO2. It participates in porphyrin-containing compound metabolism; protoporphyrin-IX biosynthesis; coproporphyrinogen-III from 5-aminolevulinate: step 4/4. Catalyzes the decarboxylation of four acetate groups of uroporphyrinogen-III to yield coproporphyrinogen-III. The sequence is that of Uroporphyrinogen decarboxylase from Prochlorococcus marinus (strain MIT 9303).